Consider the following 434-residue polypeptide: Peptidase B (434 aa).

Mn(2+) is bound by residues K198 and D203. K210 is a catalytic residue. D221, D280, and E282 together coordinate Mn(2+). R284 is an active-site residue.

Belongs to the peptidase M17 family. In terms of assembly, homohexamer. It depends on Mn(2+) as a cofactor.

The protein localises to the cytoplasm. It catalyses the reaction Release of an N-terminal amino acid, Xaa, from a peptide or arylamide. Xaa is preferably Glu or Asp but may be other amino acids, including Leu, Met, His, Cys and Gln.. Functionally, probably plays an important role in intracellular peptide degradation. This Pasteurella multocida (strain Pm70) protein is Peptidase B.